The primary structure comprises 179 residues: Inner membrane-spanning protein YciB (179 aa).

Helical transmembrane passes span 11–31 (ILFFAVYKLQGIQAAAITLII), 52–69 (LIMGSAVVFFGSLSAYFN), 71–91 (LEFLKWKVTVVYALFSLILLV), 121–141 (LGWAVFFLLCMLINLYISQYL), and 149–169 (FKTFGILGMTLIATLVTGVYI).

This sequence belongs to the YciB family.

Its subcellular location is the cell inner membrane. Plays a role in cell envelope biogenesis, maintenance of cell envelope integrity and membrane homeostasis. The chain is Inner membrane-spanning protein YciB from Histophilus somni (strain 129Pt) (Haemophilus somnus).